A 512-amino-acid polypeptide reads, in one-letter code: Reduced folate transporter (512 aa).

At Met1 the chain carries N-acetylmethionine. Over 1–29 the chain is Cytoplasmic; that stretch reads MVPTGQVAEKQACEEPRQDRELKSWRWLV. Residues 30–50 traverse the membrane as a helical segment; the sequence is FYLCFFGFMAQLRPGESFITP. Residues Ile48 and Thr49 each coordinate folate. The Extracellular segment spans residues 51-62; the sequence is YLLERNFTKEQV. N-linked (GlcNAc...) asparagine glycosylation is present at Asn56. A helical membrane pass occupies residues 63–85; it reads TNEIIPMLPYSHLAVLVPIFLLT. Topologically, residues 86–89 are cytoplasmic; the sequence is DYLR. Residues 90 to 110 form a helical membrane-spanning segment; that stretch reads YKPVLVLQCLSFVCVWLLLLL. At 111–114 the chain is on the extracellular side; it reads GTSV. Residues 115–137 form a helical membrane-spanning segment; sequence VHMQLMEVFYSITMAARIAYSSY. Folate-binding residues include Glu121 and Arg131. At 138–151 the chain is on the cytoplasmic side; sequence IFSLVQPSRYQRMA. A helical transmembrane segment spans residues 152-176; the sequence is SYSRAAVLLGVFISSVLGQVLVTLG. Folate is bound at residue Val162. Residues 177-181 lie on the Extracellular side of the membrane; it reads GISTY. Residues 182 to 200 form a helical membrane-spanning segment; it reads MLNCISLGFILFSLSLSLF. Topologically, residues 201–266 are cytoplasmic; sequence LKRPKRSLFF…ELVKNVRQPQ (66 aa). Residues 267 to 292 traverse the membrane as a helical segment; sequence LRLWCLWWVFNSAGYYLITYYVHVLW. Folate is bound by residues Tyr281, Tyr282, and Tyr286. Over 293 to 300 the chain is Extracellular; sequence KITDSRLN. Residues 301–323 traverse the membrane as a helical segment; that stretch reads YNGAVDAASTLLSAITAFTAGFV. The Cytoplasmic portion of the chain corresponds to 324-329; that stretch reads NIRWAL. A helical membrane pass occupies residues 330–350; the sequence is WSKLVIASVIAIQAGLVFCMF. Topologically, residues 351–353 are extracellular; sequence QIP. A helical membrane pass occupies residues 354-377; sequence DIWVCYVTFVLFRGAYQFLVPIAT. Positions 366 and 370 each coordinate folate. The Cytoplasmic portion of the chain corresponds to 378-391; that stretch reads FQIASSLSKELCAL. A helical membrane pass occupies residues 392–415; that stretch reads VFGINTFLATALKTSITLVVSDKR. Residues 400–412 form a required for substrate-binding region; that stretch reads ATALKTSITLVVS. At 416 to 423 the chain is on the extracellular side; it reads GLGLQVHQ. Residues 424–448 form a helical membrane-spanning segment; that stretch reads QFRIYFMYFLTLSIICLAWAGLDGL. Topologically, residues 449–512 are cytoplasmic; that stretch reads RYYRRGRHQP…RADLRVEAKA (64 aa). A phosphoserine mark is found at Ser466, Ser471, and Ser476. The disordered stretch occupies residues 479-512; that stretch reads DGDLRRPQPSAPQLLPEDGSVEDGRADLRVEAKA. The segment covering 500–512 has biased composition (basic and acidic residues); sequence EDGRADLRVEAKA.

Belongs to the reduced folate carrier (RFC) transporter (TC 2.A.48) family. Expressed in liver, heart, brain, spleen, lung and skeletal muscle.

The protein resides in the cell membrane. The protein localises to the apical cell membrane. It is found in the basolateral cell membrane. The catalysed reaction is 5-amino-1-(5-phospho-beta-D-ribosyl)imidazole-4-carboxamide(in) + (6S)-5-methyl-5,6,7,8-tetrahydrofolate(out) = 5-amino-1-(5-phospho-beta-D-ribosyl)imidazole-4-carboxamide(out) + (6S)-5-methyl-5,6,7,8-tetrahydrofolate(in). Its function is as follows. Antiporter that mediates the import of reduced folates, driven by the export of organic anions. Also acts as an importer of immunoreactive cyclic dinucleotides, but with a lower transporter activity. Mechanistically, acts as a secondary active transporter, which exports intracellular organic anions down their concentration gradients to facilitate the uptake of its substrates. Has high affinity for N5-methyltetrahydrofolate, the predominant circulating form of folate. Also mediates the import of antifolate drug methotrexate. 5-amino-4-imidazolecarboxamide riboside (AICAR), when phosphorylated to AICAR monophosphate, can serve as an organic anion for antiporter activity. This is Reduced folate transporter from Rattus norvegicus (Rat).